We begin with the raw amino-acid sequence, 148 residues long: MFNDIGPLELVTLVVLAVLVFGPDKLPKMIQDVTRTIRKIREFSESAKQDIREELGPEFKDFEFEDLNPKTFIRKQLDNDELGLKEIRNGFDLKKEMAEVTDAVHGRESETSASSSSANGSAGGTVDMTKKREQLEADERPPFDADAT.

Residues 2–22 (FNDIGPLELVTLVVLAVLVFG) traverse the membrane as a helical segment. Basic and acidic residues-rich tracts occupy residues 100–110 (VTDAVHGRESE) and 128–148 (MTKKREQLEADERPPFDADAT). Positions 100 to 148 (VTDAVHGRESETSASSSSANGSAGGTVDMTKKREQLEADERPPFDADAT) are disordered.

Belongs to the TatB family. In terms of assembly, the Tat system comprises two distinct complexes: a TatABC complex, containing multiple copies of TatA, TatB and TatC subunits, and a separate TatA complex, containing only TatA subunits. Substrates initially bind to the TatABC complex, which probably triggers association of the separate TatA complex to form the active translocon.

The protein localises to the cell membrane. Functionally, part of the twin-arginine translocation (Tat) system that transports large folded proteins containing a characteristic twin-arginine motif in their signal peptide across membranes. Together with TatC, TatB is part of a receptor directly interacting with Tat signal peptides. TatB may form an oligomeric binding site that transiently accommodates folded Tat precursor proteins before their translocation. The chain is Sec-independent protein translocase protein TatB from Streptomyces avermitilis (strain ATCC 31267 / DSM 46492 / JCM 5070 / NBRC 14893 / NCIMB 12804 / NRRL 8165 / MA-4680).